A 439-amino-acid polypeptide reads, in one-letter code: Xylose isomerase (439 aa).

Active-site residues include H101 and D104. Residues E232, E268, H271, D296, D307, D309, and D339 each contribute to the Mg(2+) site.

It belongs to the xylose isomerase family. Homotetramer. Mg(2+) serves as cofactor.

It localises to the cytoplasm. The enzyme catalyses alpha-D-xylose = alpha-D-xylulofuranose. This chain is Xylose isomerase, found in Serratia proteamaculans (strain 568).